Reading from the N-terminus, the 272-residue chain is Acidic leucine-rich nuclear phosphoprotein 32-related protein 2 (272 aa).

LRR repeat units lie at residues serine 57–proline 78, alanine 79–alanine 100, and threonine 106–alanine 127. The LRRCT domain occupies cysteine 139–glutamate 184. Positions glycine 163–asparagine 272 are disordered. Residues methionine 164 to glutamate 241 are compositionally biased toward acidic residues. A compositionally biased stretch (polar residues) spans serine 248–proline 257.

The protein belongs to the ANP32 family.

The polypeptide is Acidic leucine-rich nuclear phosphoprotein 32-related protein 2 (Oryza sativa subsp. japonica (Rice)).